The chain runs to 71 residues: Vitellogenin-B2 (71 aa).

A signal peptide spans 1–15; sequence MRGIILALLLALAGC. The region spanning 24 to 71 is the Vitellogenin domain; it reads FSESKTYVYNYEGIILNGIPENGLARSGIKLNCKVELSGYAQRSYMLK.

Produced by the liver, secreted into the blood and then sequestered by receptor mediated endocytosis into growing oocytes, where it is generally cleaved, giving rise to the respective yolk components.

Functionally, precursor of the major egg-yolk proteins that are sources of nutrients during early development of oviparous organisms. The chain is Vitellogenin-B2 from Xenopus laevis (African clawed frog).